A 200-amino-acid chain; its full sequence is SKP1-like protein 19 (200 aa).

The segment covering 67–92 (DDVVETHESSTKGDKTVEEAKKKPDD) has biased composition (basic and acidic residues). The tract at residues 67 to 109 (DDVVETHESSTKGDKTVEEAKKKPDDVAVPESTEGDDEAEDKK) is disordered. The segment at 132–190 (ILAANYLNVQGLFDLCSKTIADYIKDMTPEEVRELFNIENDFTPEEEEAIRNENAWTFE) is interaction with the F-box domain of F-box proteins.

It belongs to the SKP1 family. As to quaternary structure, part of a SCF (SKP1-cullin-F-box) protein ligase complex. Interacts with CPR1/CPR30. Expressed in leaves and flowers.

The protein resides in the nucleus. It functions in the pathway protein modification; protein ubiquitination. Functionally, involved in ubiquitination and subsequent proteasomal degradation of target proteins. Together with CUL1, RBX1 and a F-box protein, it forms a SCF E3 ubiquitin ligase complex. The functional specificity of this complex depends on the type of F-box protein. In the SCF complex, it serves as an adapter that links the F-box protein to CUL1. This chain is SKP1-like protein 19 (ASK19), found in Arabidopsis thaliana (Mouse-ear cress).